The following is a 120-amino-acid chain: Fumarate reductase subunit D (120 aa).

3 helical membrane passes run 25–45 (FAMLTPVTILVLGILVPLGVI), 55–75 (VAGFVTSIIGALFVIGSISMP), and 100–120 (IACYAAAALATVLSVVFIFMI).

Belongs to the FrdD family. In terms of assembly, part of an enzyme complex containing four subunits: a flavoprotein (FrdA), an iron-sulfur protein (FrdB), and two hydrophobic anchor proteins (FrdC and FrdD).

It is found in the cell inner membrane. Its function is as follows. Anchors the catalytic components of the fumarate reductase complex to the cell membrane, binds quinones. This chain is Fumarate reductase subunit D, found in Aliivibrio fischeri (strain MJ11) (Vibrio fischeri).